Here is a 370-residue protein sequence, read N- to C-terminus: Accessory Sec system protein translocase subunit SecY2 (370 aa).

The next 9 membrane-spanning stretches (helical) occupy residues 17-37, 65-85, 105-125, 134-154, 155-175, 188-208, 240-260, 276-296, and 339-359; these read IIFT…PAIT, VFSL…LFYY, IFTL…LLSH, WLII…SDLN, MRFG…RSIM, LLIS…FIEI, IAIM…NLIV, FSTP…SYGI, and WIGA…TLLI.

The protein belongs to the SecY/SEC61-alpha family. SecY2 subfamily. As to quaternary structure, component of the accessory SecA2/SecY2 protein translocase complex required to export cell wall proteins. May form heterotrimers with SecE and SecG subunits.

It localises to the cell membrane. Its function is as follows. Part of the accessory SecA2/SecY2 system specifically required for export of possible cell wall proteins. The central subunit of a protein translocation channel. The protein is Accessory Sec system protein translocase subunit SecY2 of Staphylococcus carnosus (strain TM300).